The following is a 308-amino-acid chain: Glutaminase (308 aa).

Substrate-binding residues include Ser66, Asn117, Glu161, Asn168, Tyr192, Tyr244, and Val262.

It belongs to the glutaminase family. As to quaternary structure, homotetramer.

It catalyses the reaction L-glutamine + H2O = L-glutamate + NH4(+). The chain is Glutaminase from Salmonella agona (strain SL483).